A 245-amino-acid chain; its full sequence is uncharacterized protein (245 aa).

6 consecutive transmembrane segments (helical) span residues 38–58, 68–88, 100–120, 129–149, 194–214, and 217–237; these read IYPA…AIFI, TIEL…QGYF, IWSL…LILA, VLFI…FVSA, VNNI…FLMN, and IAFI…LIIH.

Belongs to the acyltransferase 3 family.

The protein resides in the cell membrane. This is an uncharacterized protein from Haemophilus influenzae (strain ATCC 51907 / DSM 11121 / KW20 / Rd).